A 304-amino-acid chain; its full sequence is N-acetyllactosaminide alpha-2,3-sialyltransferase (304 aa).

CMP-N-acetyl-beta-neuraminate is bound by residues 221 to 225 (FPHPA), 242 to 243 (FE), and 262 to 263 (SS). The active-site Proton donor is His223.

It belongs to the glycosyltransferase 52 family.

It catalyses the reaction a beta-D-galactosyl-(1-&gt;4)-N-acetyl-beta-D-glucosaminyl derivative + CMP-N-acetyl-beta-neuraminate = an N-acetyl-alpha-neuraminyl-(2-&gt;3)-beta-D-galactosyl-(1-&gt;4)-N-acetyl-beta-D-glucosaminyl derivative + CMP + H(+). It participates in bacterial outer membrane biogenesis; lipooligosaccharide biosynthesis. Its function is as follows. Catalyzes the transfer of sialic acid from the substrate CMP-N-acetylneuraminate to the terminal galactose residue of the N-acetyllactosamine moiety of surface lipooligosaccharide (LOS). Thus, functions in the sialylation of LOS, which plays a role in the evasion of the host immune response. This chain is N-acetyllactosaminide alpha-2,3-sialyltransferase, found in Haemophilus influenzae (strain ATCC 51907 / DSM 11121 / KW20 / Rd).